The chain runs to 143 residues: Large ribosomal subunit protein uL16 (143 aa).

The protein belongs to the universal ribosomal protein uL16 family. Part of the 50S ribosomal subunit.

Functionally, binds 23S rRNA and is also seen to make contacts with the A and possibly P site tRNAs. The chain is Large ribosomal subunit protein uL16 from Oenococcus oeni (strain ATCC BAA-331 / PSU-1).